The following is a 391-amino-acid chain: Origin recognition complex subunit 2 (391 aa).

Residues Met1–Lys43 are disordered. Over residues Phe22–Ser38 the composition is skewed to polar residues.

Belongs to the ORC2 family. As to quaternary structure, ORC is composed of six subunits.

The protein localises to the nucleus. Its function is as follows. Component of the origin recognition complex (ORC) that binds origins of replication. DNA-binding is ATP-dependent, however specific DNA sequences that define origins of replication have not been identified so far. ORC is required to assemble the pre-replication complex necessary to initiate DNA replication. This is Origin recognition complex subunit 2 (orcB) from Dictyostelium discoideum (Social amoeba).